The primary structure comprises 987 residues: UPF0182 protein DIP0733 (987 aa).

Transmembrane regions (helical) follow at residues 19-39, 63-83, 115-135, 176-196, 212-234, 261-281, and 290-310; these read LTWL…VVDL, IGLF…AGWF, FLVV…QQAW, SVLL…LGGI, YAKV…SYWL, AKIV…SVIV, and ISTV…PIMM. Residues 904 to 927 show a composition bias toward basic and acidic residues; sequence DLGEAKGLKPESQNRDKPEDKEGK. The segment at 904-950 is disordered; sequence DLGEAKGLKPESQNRDKPEDKEGKAPSTPSAPASGSGTTGEAIGKIN. The span at 928–943 shows a compositional bias: low complexity; it reads APSTPSAPASGSGTTG.

Belongs to the UPF0182 family.

It localises to the cell membrane. This Corynebacterium diphtheriae (strain ATCC 700971 / NCTC 13129 / Biotype gravis) protein is UPF0182 protein DIP0733.